The chain runs to 319 residues: MKRIGILTSGGDAPGMNAAVRAVTRVAIANGLEVFGIRYGFAGLVAGDIFPLESEDVAHLINVSGTFLYSARYPEFAEEEGQLAGIEQLKKHGIDAVVVIGGDGSYHGALQLTRHGFNSIGLPGTIDNDIPYTDATIGYDTACMTAMDAIDKIRDTASSHHRVFIVNVMGRNCGDIAMRVGVACGADAIVIPERPYDVEEIANRLKQAQESGKDHGLVVVAEGVMTADQFMAELKKYGDFDVRANVLGHMQRGGTPTVSDRVLASKLGSEAVHLLLEGKGGLAVGIENGKVTSHDILDLFDESHRGDYDLLKLNADLSR.

ATP is bound at residue Gly-11. Arg-21–Arg-25 is an ADP binding site. ATP is bound by residues Arg-72–Tyr-73 and Gly-102–Ser-105. Position 103 (Asp-103) interacts with Mg(2+). Residue Thr-125–Asp-127 coordinates substrate. Asp-127 (proton acceptor) is an active-site residue. Arg-154 is an ADP binding site. Residues Arg-162 and Met-169–Arg-171 contribute to the substrate site. Residues Gly-185–Asp-187 and Lys-213–His-215 each bind ADP. Residues Glu-222, Arg-243, and His-249–Arg-252 each bind substrate.

This sequence belongs to the phosphofructokinase type A (PFKA) family. ATP-dependent PFK group I subfamily. Prokaryotic clade 'B1' sub-subfamily. In terms of assembly, homotetramer. The cofactor is Mg(2+).

The protein localises to the cytoplasm. It catalyses the reaction beta-D-fructose 6-phosphate + ATP = beta-D-fructose 1,6-bisphosphate + ADP + H(+). The protein operates within carbohydrate degradation; glycolysis; D-glyceraldehyde 3-phosphate and glycerone phosphate from D-glucose: step 3/4. Its activity is regulated as follows. Allosterically activated by ADP and other diphosphonucleosides, and allosterically inhibited by phosphoenolpyruvate. The binding affinities for these effectors are decreased however, and therefore the allosteric effect becomes apparent only at high effector concentrations. In terms of biological role, catalyzes the phosphorylation of D-fructose 6-phosphate to fructose 1,6-bisphosphate by ATP, the first committing step of glycolysis. The polypeptide is ATP-dependent 6-phosphofructokinase (Lactobacillus delbrueckii subsp. bulgaricus).